We begin with the raw amino-acid sequence, 399 residues long: Sperm equatorial segment protein 1 (399 aa).

Residues 1–18 (MKLVVLVALWLWPSSLLA) form the signal peptide. An N-linked (GlcNAc...) asparagine glycan is attached at Asn-128. Over residues 136 to 145 (EEPFIEKEPE) the composition is skewed to basic and acidic residues. Positions 136–250 (EEPFIEKEPE…PSAEDLPGRH (115 aa)) are disordered. Residues 157–167 (PEPELEPEPEP) are compositionally biased toward acidic residues. The span at 182–206 (VTSTTPNKELTGTSRISSMATQPAN) shows a compositional bias: polar residues. The span at 207–225 (TQATRITVTVKTTSTMDVS) shows a compositional bias: low complexity.

It belongs to the SPESP1 family. In terms of processing, glycosylated. In testis there are two predominant forms of 77- and 67-kDa and a form of 47-kDa, whereas in epididymal sperm from caput, corpus, and cauda there are two forms of 47- and 43-kDa. Testis forms contain complex carbohydrate residues. Epididymal sperm forms are N-glycosylated. Then undergoes significant glycosylation in the testis and that the majority of these glycoconjugates are removed by the time sperm reach the caput epididymis. Testis specific.

Its subcellular location is the cytoplasmic vesicle. It is found in the secretory vesicle. The protein localises to the acrosome. In terms of biological role, involved in fertilization ability of sperm. The sequence is that of Sperm equatorial segment protein 1 from Mus musculus (Mouse).